The sequence spans 200 residues: Small ribosomal subunit protein uS4c (200 aa).

One can recognise an S4 RNA-binding domain in the interval 88-148 (IRLDNTIFNL…PKSYYIFKLC (61 aa)).

The protein belongs to the universal ribosomal protein uS4 family. Part of the 30S ribosomal subunit.

It localises to the plastid. It is found in the apicoplast. One of the primary rRNA binding proteins, it binds directly to 16S rRNA where it nucleates assembly of the body of the 30S subunit. The protein is Small ribosomal subunit protein uS4c (rps4) of Eimeria tenella (Coccidian parasite).